Reading from the N-terminus, the 417-residue chain is UDP-N-acetylmuramoylalanine--D-glutamate ligase (417 aa).

An ATP-binding site is contributed by G108 to T114.

This sequence belongs to the MurCDEF family.

Its subcellular location is the cytoplasm. The catalysed reaction is UDP-N-acetyl-alpha-D-muramoyl-L-alanine + D-glutamate + ATP = UDP-N-acetyl-alpha-D-muramoyl-L-alanyl-D-glutamate + ADP + phosphate + H(+). Its pathway is cell wall biogenesis; peptidoglycan biosynthesis. Cell wall formation. Catalyzes the addition of glutamate to the nucleotide precursor UDP-N-acetylmuramoyl-L-alanine (UMA). In Chlamydia pneumoniae (Chlamydophila pneumoniae), this protein is UDP-N-acetylmuramoylalanine--D-glutamate ligase.